The primary structure comprises 400 residues: Double C2-like domain-containing protein alpha (400 aa).

The interaction with UNC13D and DYNLT1 stretch occupies residues 1–89; the sequence is MRGRRGDRMT…DSYDSDDATA (89 aa). 2 C2 domains span residues 89–211 and 251–384; these read ALGT…HFNI and ERGR…ERWH. The Ca(2+) site is built by D120, D126, D181, D183, D282, D288, D342, D344, and D350. The segment at 215–400 is interaction with UNC13D; the sequence is RQVPLASPSS…PPAAGALSSA (186 aa).

As to quaternary structure, interacts (via N-terminus) with UNC13A. Interacts with cytoplasmic dynein light chain DYNLT1. Interacts with UNC13D. Ca(2+) is required as a cofactor. In terms of tissue distribution, predominantly expressed in brain. Also expressed in testis.

It localises to the lysosome. It is found in the cytoplasmic vesicle. Its subcellular location is the secretory vesicle. The protein resides in the synaptic vesicle membrane. The protein localises to the synapse. It localises to the synaptosome. Its function is as follows. Calcium sensor which most probably regulates fusion of vesicles with membranes. Binds calcium and phospholipids. May be involved in calcium dependent neurotransmitter release through the interaction with UNC13A. May be involved in calcium-dependent spontaneous release of neurotransmitter in absence of action potentials in neuronal cells. Regulates Ca(2+)-dependent secretory lysosome exocytosis in mast cells. In Homo sapiens (Human), this protein is Double C2-like domain-containing protein alpha (DOC2A).